The primary structure comprises 42 residues: Photosystem I reaction center subunit IX (42 aa).

A helical transmembrane segment spans residues 7-27 (YLSTAPVLAALSLGFLAGLLI).

Belongs to the PsaJ family.

Its subcellular location is the plastid. The protein localises to the chloroplast thylakoid membrane. In terms of biological role, may help in the organization of the PsaE and PsaF subunits. This chain is Photosystem I reaction center subunit IX, found in Cryptomeria japonica (Japanese cedar).